Consider the following 499-residue polypeptide: Tektin-like protein 1 (499 aa).

The residue at position 14 (S14) is a Phosphoserine. A coiled-coil region spans residues 201–225; sequence WEKKELKSMKRKMEKDMEISEDLLK. The segment at 265-286 is disordered; the sequence is VDITRPPTPRTQGLKTPPPDPI. Positions 308-328 form a coiled coil; that stretch reads KDILTEMAKNEVDIQNQQQEI. The residue at position 372 (Y372) is a Phosphotyrosine.

As to quaternary structure, microtubule inner protein component of sperm flagellar doublet microtubules.

It is found in the cytoplasm. It localises to the cytoskeleton. The protein resides in the flagellum axoneme. Microtubule inner protein (MIP) part of the dynein-decorated doublet microtubules (DMTs) in sperm flagellar axoneme, which is required for motile flagellum beating. Forms an extensive interaction network cross-linking the lumen of axonemal doublet microtubules. In Mus musculus (Mouse), this protein is Tektin-like protein 1.